The following is a 1305-amino-acid chain: Contactin-associated protein-like 5 (1305 aa).

Positions 1–24 (MDSVPRLTGVFTLLLSGLWHLGSS) are cleaved as a signal peptide. Topologically, residues 25–1236 (ATNYNCDDPL…PLTNAVRSDS (1212 aa)) are extracellular. An F5/8 type C domain is found at 30 to 174 (CDDPLASLLS…IGMRVEVYGC (145 aa)). A disulfide bond links C30 and C174. 2 Laminin G-like domains span residues 180–360 (VADF…TFSC) and 367–544 (PITF…IDLC). Residues N282, N355, and N496 are each glycosylated (N-linked (GlcNAc...) asparagine). Cysteines 329 and 360 form a disulfide. 4 cysteine pairs are disulfide-bonded: C512–C544, C550–C561, C555–C570, and C572–C582. Residues 546–583 (IKDRCLPNYCEHGGFCSQSWTTFYCNCSNTGYTGATCH) form the EGF-like 1 domain. In terms of domain architecture, Fibrinogen C-terminal spans 584-790 (NSLYEQSCEV…LRCYGDRHFW (207 aa)). N-linked (GlcNAc...) asparagine glycosylation occurs at N622. The region spanning 791–956 (NAVSFYTEAS…KVTSGVRPGC (166 aa)) is the Laminin G-like 3 domain. Cystine bridges form between C929–C956, C960–C973, C967–C982, C984–C994, and C1163–C1198. In terms of domain architecture, EGF-like 2 spans 957-995 (PGHCSTYGSICHNGGKCVEKYSGYFCDCTNSPYEGPFCK). The Laminin G-like 4 domain occupies 1000 to 1198 (AVFEAGTSVT…VQGTLMESSC (199 aa)). A helical transmembrane segment spans residues 1237–1257 (AVIGGVIAVVIFIIFSIIGIM). Residues 1258–1305 (TRFLYQHKQSHRTNQMKEKEYPENLDSSFRNDIDLQNTVSECKREYFI) lie on the Cytoplasmic side of the membrane.

It belongs to the neurexin family.

The protein localises to the membrane. Functionally, may play a role in the correct development and proper functioning of the peripheral and central nervous system and be involved in cell adhesion and intercellular communication. This chain is Contactin-associated protein-like 5 (CNTNAP5), found in Canis lupus familiaris (Dog).